The sequence spans 473 residues: Calcium uptake protein 1, mitochondrial (473 aa).

Residues 1–33 constitute a mitochondrion transit peptide; it reads MFRLRFIPAVAGLAAVSRRYHGVANHARSRRRL. Residues 61–101 are disordered; it reads SSVKHSMREETSEKEKEDADQAVESSDEDQPQEGKKKKARV. The span at 66-79 shows a compositional bias: basic and acidic residues; sequence SMREETSEKEKEDA. Positions 80–91 are enriched in acidic residues; that stretch reads DQAVESSDEDQP. The polybasic region stretch occupies residues 96-107; it reads KKKARVGFRDRK. Positions 123–126 are k/R-ring; the sequence is KIFR. The EF-hand 1 domain maps to 215–250; it reads TPQRNFEIAFKMFDLNGDGEVDMEEFEQVQSIIRSQ. The Ca(2+) site is built by Asp-228, Asn-230, Asp-232, Glu-234, and Glu-239. The interval 256–260 is k/R-ring; the sequence is RHRDR. Residues 405–440 form the EF-hand 2 domain; sequence LSDHVCDVVFALFDCDGNGELSNKEFIAIMKQRLMR. Ca(2+) is bound by residues Asp-418, Asp-420, Asn-422, Glu-424, and Glu-429. The segment at 452–462 is C-helix region; sequence RLMRAMWKCAQ.

It belongs to the MICU1 family. MICU1 subfamily. As to quaternary structure, heterodimer; disulfide-linked; heterodimerizes with micu2. Component of the uniplex complex.

The protein resides in the mitochondrion intermembrane space. Its subcellular location is the mitochondrion inner membrane. Functionally, calcium sensor of the mitochondrial calcium uniporter (mcu) channel, which senses calcium level via its EF-hand domains. micu1 and micu2 form a disulfide-linked heterodimer that stimulates and inhibits MCU activity, depending on the concentration of calcium. At low calcium levels, micu1 occludes the pore of the MCU channel, preventing mitochondrial calcium uptake. At higher calcium levels, calcium-binding to micu1 and micu2 induces a conformational change that weakens mcu-micu1 interactions and moves the micu1-micu2 heterodimer away from the pore, allowing calcium permeation through the mcu channel. Also required to protect against manganese toxicity by preventing manganese uptake by mcu. The sequence is that of Calcium uptake protein 1, mitochondrial (micu1) from Xenopus tropicalis (Western clawed frog).